We begin with the raw amino-acid sequence, 347 residues long: Quinolinate synthase (347 aa).

Residues His47 and Ser68 each coordinate iminosuccinate. A [4Fe-4S] cluster-binding site is contributed by Cys113. Residues Tyr139–Asn141 and Ser156 contribute to the iminosuccinate site. Cys200 contributes to the [4Fe-4S] cluster binding site. Iminosuccinate contacts are provided by residues His226–Glu228 and Thr243. [4Fe-4S] cluster is bound at residue Cys297.

This sequence belongs to the quinolinate synthase family. Type 1 subfamily. [4Fe-4S] cluster serves as cofactor.

The protein localises to the cytoplasm. The catalysed reaction is iminosuccinate + dihydroxyacetone phosphate = quinolinate + phosphate + 2 H2O + H(+). The protein operates within cofactor biosynthesis; NAD(+) biosynthesis; quinolinate from iminoaspartate: step 1/1. In terms of biological role, catalyzes the condensation of iminoaspartate with dihydroxyacetone phosphate to form quinolinate. This Escherichia fergusonii (strain ATCC 35469 / DSM 13698 / CCUG 18766 / IAM 14443 / JCM 21226 / LMG 7866 / NBRC 102419 / NCTC 12128 / CDC 0568-73) protein is Quinolinate synthase.